The primary structure comprises 161 residues: Small ribosomal subunit protein uS9 (161 aa).

A compositionally biased stretch (polar residues) spans 1 to 21; that stretch reads MATLQSLADLNRANTQTSNPE. The segment at 1-25 is disordered; that stretch reads MATLQSLADLNRANTQTSNPENEAP.

The protein belongs to the universal ribosomal protein uS9 family.

The polypeptide is Small ribosomal subunit protein uS9 (Methylorubrum populi (strain ATCC BAA-705 / NCIMB 13946 / BJ001) (Methylobacterium populi)).